A 234-amino-acid polypeptide reads, in one-letter code: Mannose/glucose-specific lectin Cramoll (234 aa).

Glu8 and Asp10 together coordinate Mn(2+). 4 residues coordinate Ca(2+): Asp10, Tyr12, Asn14, and Asp19. Tyr12 is a binding site for a carbohydrate. Mn(2+) contacts are provided by Asp19, His24, and Ser34. 99 to 100 (LY) lines the a carbohydrate pocket. Asp205 is a binding site for Ca(2+). Arg225 is an a carbohydrate binding site.

The protein belongs to the leguminous lectin family. In terms of assembly, homotetramer. In terms of processing, the alpha and beta chains are produced by partial proteolytic processing of the lectin precursor by an asparaginyl endopeptidase.

Functionally, glucose/D-mannose specific lectin. The polypeptide is Mannose/glucose-specific lectin Cramoll (Cratylia mollis (Camaratu bean)).